We begin with the raw amino-acid sequence, 217 residues long: KH domain-containing protein 3 (217 aa).

Residues 1–40 (MDAPRRFPTLVQLMQPKAMPVEVLGHLPKRFSWFHSEFLK) are involved in RNA binding. The KH; atypical domain maps to 40-103 (KNPKVVRLEV…SYQEDTIKMI (64 aa)). Positions 129–217 (QKAETQRSSI…EDARDPVTRL (89 aa)) are disordered. The span at 138–155 (IEVREAGTQRSVEVREAG) shows a compositional bias: basic and acidic residues. Residues threonine 145 and threonine 156 each carry the phosphothreonine; by ATM modification. Composition is skewed to polar residues over residues 156–170 (TQRSVEVQEVGTQGS) and 177–194 (AGTQQSLQAANKSGTQRS). The residue at position 182 (serine 182) is a Phosphoserine. Residues 205 to 217 (RFREDARDPVTRL) show a composition bias toward basic and acidic residues.

This sequence belongs to the KHDC1 family. Component of the subcortical maternal complex (SCMC), at least composed of NLRP5, KHDC3L, OOEP, and TLE6 isoform 1. Within the complex, interacts with NLRP5, KHDC3L and TLE6 isoform 1. The SCMC may facilitate translocation of its components between the nuclear and cytoplasmic compartments. Forms a scaffold complex with OOEP/FLOPED, and interacts with BLM and TRIM25 at DNA replication forks. Interacts with PARP1; the interaction is increased following the formation of DNA double-strand breaks. Interacts with NUMA1. In terms of tissue distribution, expression appears to be maximal in germinal vesicle oocytes, it tails off through metaphase II oocytes and is undetectable following the completion of the oocyte to embryo transition.

It localises to the cytoplasm. The protein resides in the cell cortex. The protein localises to the nucleus. Its subcellular location is the mitochondrion. It is found in the cytoskeleton. It localises to the microtubule organizing center. The protein resides in the centrosome. The protein localises to the chromosome. Its function is as follows. Component of the subcortical maternal complex (SCMC), a multiprotein complex that plays a key role in early embryonic development. The SCMC complex is a structural constituent of cytoplasmic lattices, which consist in fibrous structures found in the cytoplasm of oocytes and preimplantation embryos. They are required to store maternal proteins critical for embryonic development, such as proteins that control epigenetic reprogramming of the preimplantation embryo, and prevent their degradation or activation. KHDC3 ensures proper spindle assembly by regulating the localization of AURKA via RHOA signaling and of PLK1 via a RHOA-independent process. Required for the localization of MAD2L1 to kinetochores to enable spindle assembly checkpoint function. As part of the OOEP-KHDC3 scaffold, recruits BLM and TRIM25 to DNA replication forks, thereby promoting the ubiquitination of BLM by TRIM25, enhancing BLM retainment at replication forks and therefore promoting stalled replication fork restart. Regulates homologous recombination-mediated DNA repair via recruitment of RAD51 to sites of DNA double-strand breaks, and sustainment of PARP1 activity, which in turn modulates downstream ATM or ATR activation. Activation of ATM or ATR in response to DNA double-strand breaks may be cell-type specific. Its role in DNA double-strand break repair is independent of its role in restarting stalled replication forks. Promotes neural stem cell neurogenesis and neuronal differentiation in the hippocampus. May regulate normal development of learning, memory and anxiety. Capable of binding RNA. In Homo sapiens (Human), this protein is KH domain-containing protein 3.